The chain runs to 312 residues: Olfactory receptor 2L13 (312 aa).

The Extracellular portion of the chain corresponds to 1-24 (MEKWNHTSNDFILLGLLPPNQTGI). N-linked (GlcNAc...) asparagine glycosylation is found at N5 and N20. The chain crosses the membrane as a helical span at residues 25 to 48 (FLLCLIILIFFLASVGNSAMIHLI). Over 49 to 56 (HVDPRLHT) the chain is Cytoplasmic. A helical membrane pass occupies residues 57-78 (PMYFLLSQLSLMDLMYISTTVP). The Extracellular segment spans residues 79 to 99 (KMAYNFLSGQKGISFLGCGVQ). Residues C96 and C188 are joined by a disulfide bond. A helical transmembrane segment spans residues 100–119 (SFFFLTMACSEGLLLTSMAY). Residues 120 to 138 (DRYLAICHSLYYPIRMSKM) are Cytoplasmic-facing. A helical transmembrane segment spans residues 139 to 157 (MCVKMIGGSWTLGSINSLA). Residues 158-194 (HTVFALHIPYCRSRAIDHFFCDVPAMLLLACTDTWVY) are Extracellular-facing. The chain crosses the membrane as a helical span at residues 195-218 (EYMVFVSTSLFLLFPFIGITSSCG). Topologically, residues 219 to 235 (RVLFAVYHMHSKEGRKK) are cytoplasmic. The chain crosses the membrane as a helical span at residues 236 to 258 (AFTTISTHLTVVIFYYAPFVYTY). Topologically, residues 259 to 271 (LRPRNLRSPAEDK) are extracellular. A helical transmembrane segment spans residues 272-291 (ILAVFYTILTPMLNPIIYSL). The Cytoplasmic segment spans residues 292-312 (RNKEVLGAMRRVFGIFSFLKE).

Belongs to the G-protein coupled receptor 1 family.

It is found in the cell membrane. In terms of biological role, odorant receptor. The sequence is that of Olfactory receptor 2L13 (OR2L13) from Homo sapiens (Human).